Reading from the N-terminus, the 520-residue chain is 2-isopropylmalate synthase (520 aa).

In terms of domain architecture, Pyruvate carboxyltransferase spans I12–V274. The Mn(2+) site is built by D21, H209, H211, and N245. The interval R396–A520 is regulatory domain.

It belongs to the alpha-IPM synthase/homocitrate synthase family. LeuA type 1 subfamily. As to quaternary structure, homodimer. Requires Mn(2+) as cofactor.

The protein localises to the cytoplasm. It catalyses the reaction 3-methyl-2-oxobutanoate + acetyl-CoA + H2O = (2S)-2-isopropylmalate + CoA + H(+). Its pathway is amino-acid biosynthesis; L-leucine biosynthesis; L-leucine from 3-methyl-2-oxobutanoate: step 1/4. Its function is as follows. Catalyzes the condensation of the acetyl group of acetyl-CoA with 3-methyl-2-oxobutanoate (2-ketoisovalerate) to form 3-carboxy-3-hydroxy-4-methylpentanoate (2-isopropylmalate). The protein is 2-isopropylmalate synthase of Xanthomonas campestris pv. campestris (strain B100).